The following is a 366-amino-acid chain: ATP-dependent 6-phosphofructokinase 2 (366 aa).

Residues glycine 15, 78–79 (KD), and 119–122 (GDGT) each bind ATP. Aspartate 120 provides a ligand contact to Mg(2+). Residues 142-144 (TID), arginine 179, 186-188 (MGR), glutamate 239, arginine 284, and 290-293 (HIQR) contribute to the substrate site. The active-site Proton acceptor is the aspartate 144.

This sequence belongs to the phosphofructokinase type A (PFKA) family. Mixed-substrate PFK group III subfamily. Homodimer or homotetramer. The cofactor is Mg(2+).

The protein resides in the cytoplasm. The catalysed reaction is beta-D-fructose 6-phosphate + ATP = beta-D-fructose 1,6-bisphosphate + ADP + H(+). Its pathway is carbohydrate degradation; glycolysis; D-glyceraldehyde 3-phosphate and glycerone phosphate from D-glucose: step 3/4. Subject to allosteric activation by ADP and other diphosphonucleosides, and inhibition by phosphoenolpyruvate. Its function is as follows. Catalyzes the phosphorylation of D-fructose 6-phosphate to fructose 1,6-bisphosphate by ATP, the first committing step of glycolysis. The sequence is that of ATP-dependent 6-phosphofructokinase 2 from Clostridium perfringens (strain 13 / Type A).